The primary structure comprises 480 residues: ATP synthase subunit beta (480 aa).

ATP is bound at residue 158 to 165 (GGAGVGKT).

Belongs to the ATPase alpha/beta chains family. As to quaternary structure, F-type ATPases have 2 components, CF(1) - the catalytic core - and CF(0) - the membrane proton channel. CF(1) has five subunits: alpha(3), beta(3), gamma(1), delta(1), epsilon(1). CF(0) has three main subunits: a(1), b(2) and c(9-12). The alpha and beta chains form an alternating ring which encloses part of the gamma chain. CF(1) is attached to CF(0) by a central stalk formed by the gamma and epsilon chains, while a peripheral stalk is formed by the delta and b chains.

The protein localises to the cell inner membrane. It catalyses the reaction ATP + H2O + 4 H(+)(in) = ADP + phosphate + 5 H(+)(out). In terms of biological role, produces ATP from ADP in the presence of a proton gradient across the membrane. The catalytic sites are hosted primarily by the beta subunits. This is ATP synthase subunit beta from Acidobacterium capsulatum (strain ATCC 51196 / DSM 11244 / BCRC 80197 / JCM 7670 / NBRC 15755 / NCIMB 13165 / 161).